Consider the following 339-residue polypeptide: UPF0324 membrane protein spyM18_1033 (339 aa).

9 helical membrane-spanning segments follow: residues 7-24 (KLPG…AWYL), 28-50 (FPII…FYGH), 57-79 (GISF…GLNL), 84-106 (AVGM…VAYG), 118-140 (ATLV…APVI), 150-172 (AISV…GQLL), 256-275 (FILF…SFGV), 290-307 (FIVM…LVKL), and 314-336 (AILL…QLSL).

This sequence belongs to the UPF0324 family.

The protein localises to the cell membrane. This Streptococcus pyogenes serotype M18 (strain MGAS8232) protein is UPF0324 membrane protein spyM18_1033.